The primary structure comprises 186 residues: GTP-dependent dephospho-CoA kinase (186 aa).

Asp43, Ile44, Val45, Asp62, Glu120, and Asp143 together coordinate GTP.

The protein belongs to the GTP-dependent DPCK family.

The catalysed reaction is 3'-dephospho-CoA + GTP = GDP + CoA + H(+). It functions in the pathway cofactor biosynthesis; coenzyme A biosynthesis. In terms of biological role, catalyzes the GTP-dependent phosphorylation of the 3'-hydroxyl group of dephosphocoenzyme A to form coenzyme A (CoA). The polypeptide is GTP-dependent dephospho-CoA kinase (Haloquadratum walsbyi (strain DSM 16790 / HBSQ001)).